The primary structure comprises 78 residues: Sec-independent protein translocase protein TatA (78 aa).

Residues 1–21 form a helical membrane-spanning segment; it reads MGGISIWQLLIIAVIVVLLFG. The span at 47 to 59 shows a compositional bias: basic and acidic residues; that stretch reads ESEKKDADFEPKS. The interval 47-78 is disordered; the sequence is ESEKKDADFEPKSLEQQNKQAATESKKDKEQA. The span at 60–69 shows a compositional bias: polar residues; the sequence is LEQQNKQAAT.

This sequence belongs to the TatA/E family. As to quaternary structure, the Tat system comprises two distinct complexes: a TatABC complex, containing multiple copies of TatA, TatB and TatC subunits, and a separate TatA complex, containing only TatA subunits. Substrates initially bind to the TatABC complex, which probably triggers association of the separate TatA complex to form the active translocon.

Its subcellular location is the cell inner membrane. Its function is as follows. Part of the twin-arginine translocation (Tat) system that transports large folded proteins containing a characteristic twin-arginine motif in their signal peptide across membranes. TatA could form the protein-conducting channel of the Tat system. This Vibrio vulnificus (strain YJ016) protein is Sec-independent protein translocase protein TatA.